We begin with the raw amino-acid sequence, 232 residues long: Sugar fermentation stimulation protein homolog (232 aa).

Belongs to the SfsA family.

This is Sugar fermentation stimulation protein homolog from Brucella anthropi (strain ATCC 49188 / DSM 6882 / CCUG 24695 / JCM 21032 / LMG 3331 / NBRC 15819 / NCTC 12168 / Alc 37) (Ochrobactrum anthropi).